Consider the following 997-residue polypeptide: Phosphoenolpyruvate carboxylase (997 aa).

The tract at residues 1–67 (MKSSGSARTA…KPAARTREDK (67 aa)) is disordered. Residues His207 and Lys649 contribute to the active site.

The protein belongs to the PEPCase type 1 family. Requires Mg(2+) as cofactor.

The catalysed reaction is oxaloacetate + phosphate = phosphoenolpyruvate + hydrogencarbonate. In terms of biological role, forms oxaloacetate, a four-carbon dicarboxylic acid source for the tricarboxylic acid cycle. The polypeptide is Phosphoenolpyruvate carboxylase (Burkholderia vietnamiensis (strain G4 / LMG 22486) (Burkholderia cepacia (strain R1808))).